The sequence spans 345 residues: Phosphate acyltransferase (345 aa).

Belongs to the PlsX family. As to quaternary structure, homodimer. Probably interacts with PlsY.

It localises to the cytoplasm. It catalyses the reaction a fatty acyl-[ACP] + phosphate = an acyl phosphate + holo-[ACP]. The protein operates within lipid metabolism; phospholipid metabolism. Functionally, catalyzes the reversible formation of acyl-phosphate (acyl-PO(4)) from acyl-[acyl-carrier-protein] (acyl-ACP). This enzyme utilizes acyl-ACP as fatty acyl donor, but not acyl-CoA. This Photorhabdus laumondii subsp. laumondii (strain DSM 15139 / CIP 105565 / TT01) (Photorhabdus luminescens subsp. laumondii) protein is Phosphate acyltransferase.